A 3411-amino-acid chain; its full sequence is Genome polyprotein (3411 aa).

Residues 1–104 (MSGRKAQGKT…LSSRKRRSHD (104 aa)) lie on the Cytoplasmic side of the membrane. The interval 38-72 (PGPSRGVQGFIFFFLFNILTGKKITAHLKRLWKML) is hydrophobic; homodimerization of capsid protein C. The propeptide at 102–121 (SHDVLTVQFLILGMLLMTGG) is ER anchor for the capsid protein C, removed in mature form by serine protease NS3. A helical membrane pass occupies residues 105 to 125 (VLTVQFLILGMLLMTGGVTLV). The Extracellular segment spans residues 126–244 (RKNRWLLLNV…GERQLQKIER (119 aa)). 2 N-linked (GlcNAc...) asparagine; by host glycosylation sites follow: N134 and N150. The helical transmembrane segment at 245 to 265 (WFVRNPFFAVTALTIAYLVGS) threads the bilayer. Residues 266–270 (NMTQR) lie on the Cytoplasmic side of the membrane. Residues 271–285 (VVIALLVLAVGPAYS) form a helical membrane-spanning segment. The Extracellular portion of the chain corresponds to 286–730 (AHCIGITDRD…TVFGSAFQGL (445 aa)). 8 disulfides stabilise this stretch: C288–C315, C345–C401, C345–C406, C359–C390, C377–C401, C377–C406, C467–C568, and C585–C615. The interval 383–396 (DRGWGNGCGLFGKG) is fusion peptide. The chain crosses the membrane as a helical span at residues 731–751 (FGGLNWITKVIMGAVLIWVGI). Residues 752–757 (NTRNMT) are Extracellular-facing. A helical transmembrane segment spans residues 758–778 (MSMSMILVGVIMMFLSLGVGA). The Extracellular portion of the chain corresponds to 779 to 1132 (DQGCAINFGK…LVRSWVTAGE (354 aa)). 6 disulfide bridges follow: C782–C793, C833–C921, C957–C1002, C1058–C1107, C1069–C1091, and C1090–C1094. N-linked (GlcNAc...) asparagine; by host glycans are attached at residues N908 and N986. The chain crosses the membrane as a helical span at residues 1133-1153 (IHAVPFGLVSMMIAMEVVLRK). The Cytoplasmic portion of the chain corresponds to 1154–1201 (RQGPKQMLVGGVVLLGAMLVGQVTLLDLLKLTVAVGLHFHEMNNGGDA). A helical membrane pass occupies residues 1202–1222 (MYMALIAAFSIRPGLLIGFGL). Residues 1223–1287 (RTLWSPRERL…ILPLMALLTP (65 aa)) are Lumenal-facing. The helical transmembrane segment at 1288 to 1308 (VTMAEVRLAAMFFCAVVIIGV) threads the bilayer. The Cytoplasmic portion of the chain corresponds to 1309–1355 (LHQNFKDTSMQKTIPLVALTLTSYLGLTQPFLGLCAFLATRIFGRRS). A helical transmembrane segment spans residues 1356-1376 (IPVNEALAAAGLVGVLAGLAF). The Lumenal portion of the chain corresponds to 1377 to 1378 (QE). A helical transmembrane segment spans residues 1379-1399 (MENFLGPIAVGGLLMMLVSVA). The Cytoplasmic portion of the chain corresponds to 1400–1456 (GRVDGLELKKLGEVSWEEEAEISGSSARYDVALSEQGEFKLLSEEKVPWDQVVMTSL). Positions 1407-1446 (LKKLGEVSWEEEAEISGSSARYDVALSEQGEFKLLSEEKV) are interacts with and activates NS3 protease. The helical intramembrane region spans 1457 to 1477 (ALVGAALHPFALLLVLAGWLF). The Cytoplasmic segment spans residues 1478–2157 (HVRGARRSGD…RNALSMMPEA (680 aa)). The Peptidase S7 domain maps to 1485 to 1665 (SGDVLWDIPT…EVKEEGKEEL (181 aa)). Catalysis depends on charge relay system; for serine protease NS3 activity residues H1537, D1561, and S1622. The 157-residue stretch at 1669–1825 (PTMLKKGMTT…HSNGEIEDVQ (157 aa)) folds into the Helicase ATP-binding domain. The segment at 1673–1676 (KKGM) is important for RNA-binding. 1682–1689 (FHPGAGKT) lines the ATP pocket. Residues 1773-1776 (DEAH) carry the DEAH box motif. Positions 1820–1997 (EIEDVQTDIP…VRGGMVAPLY (178 aa)) constitute a Helicase C-terminal domain. An N6-acetyllysine; by host modification is found at K1877. A helical transmembrane segment spans residues 2158 to 2178 (MTIVMLFILAGLLTSGMVIFF). At 2179–2186 (MSPKGISR) the chain is on the lumenal side. Positions 2187–2207 (MSMAMGTMAGCGYLMFLGGVK) form an intramembrane region, helical. The Lumenal portion of the chain corresponds to 2208-2209 (PT). Residues 2210–2230 (HISYVMLIFFVLMVVVIPEPG) traverse the membrane as a helical segment. Topologically, residues 2231–2241 (QQRSIQDNQVA) are cytoplasmic. Residues 2242–2262 (YLIIGILTLVSAVAANELGML) form a helical membrane-spanning segment. Residues 2263-2293 (EKTKEDLFGKKNLIPSSASPWSWPDLDLKPG) lie on the Lumenal side of the membrane. The segment at residues 2294 to 2314 (AAWTVYVGIVTMLSPMLHHWI) is an intramembrane region (helical). The Lumenal segment spans residues 2315-2360 (KVEYGNLSLSGIAQSASVLSFMDKGIPFMKMNISVIMLLVSGWNSI). The helical transmembrane segment at 2361–2381 (TVMPLLCGIGCAMLHWSLILP) threads the bilayer. Over 2382–2421 (GIKAQQSKLAQRRVFHGVAENPVVDGNPTVDIEEAPEMPA) the chain is Cytoplasmic. The helical transmembrane segment at 2422-2442 (LYEKKLALYLLLALSLASVAM) threads the bilayer. Residues 2443-2445 (CRT) lie on the Lumenal side of the membrane. A helical membrane pass occupies residues 2446–2466 (PFSLAEGIVLASAALGPLIEG). Residues 2467–3411 (NTSLLWNGPM…DADLQLGELI (945 aa)) lie on the Cytoplasmic side of the membrane. The mRNA cap 0-1 NS5-type MT domain maps to 2507-2771 (GSANGKTLGE…DVILPIGTRS (265 aa)). An S-adenosyl-L-methionine-binding site is contributed by S2562. The residue at position 2562 (S2562) is a Phosphoserine. K2567 acts as the For 2'-O-MTase activity in catalysis. S-adenosyl-L-methionine-binding residues include G2592, W2593, T2610, L2611, D2637, and I2638. The active-site For 2'-O-MTase activity is the D2652. S-adenosyl-L-methionine is bound at residue I2653. Catalysis depends on for 2'-O-MTase activity residues K2688 and E2724. S-adenosyl-L-methionine is bound at residue Y2726. Positions 2878-2911 (RKIMKVVNRWLFRHLAREKNPRLCTKEEFIAKVR) match the Nuclear localization signal motif. Zn(2+)-binding residues include E2945, H2949, C2954, and C2957. The 153-residue stretch at 3035–3187 (GGFYADDTAG…RPIDDRFGLA (153 aa)) folds into the RdRp catalytic domain. Zn(2+)-binding residues include H3222, C3238, and C3357.

It in the N-terminal section; belongs to the class I-like SAM-binding methyltransferase superfamily. mRNA cap 0-1 NS5-type methyltransferase family. In terms of assembly, homodimer. Interacts (via N-terminus) with host EXOC1 (via C-terminus); this interaction results in EXOC1 degradation through the proteasome degradation pathway. As to quaternary structure, forms heterodimers with envelope protein E in the endoplasmic reticulum and Golgi. Homodimer; in the endoplasmic reticulum and Golgi. Interacts with protein prM. Interacts with non-structural protein 1. In terms of assembly, homodimer; Homohexamer when secreted. Interacts with envelope protein E. As to quaternary structure, interacts (via N-terminus) with serine protease NS3. Forms a heterodimer with serine protease NS3. May form homooligomers. In terms of assembly, forms a heterodimer with NS2B. Interacts with non-structural protein 2A (via N-terminus). Interacts with NS4B. Interacts with unphosphorylated RNA-directed RNA polymerase NS5; this interaction stimulates RNA-directed RNA polymerase NS5 guanylyltransferase activity. NS3 interacts with host PDCD6IP; this interaction contributes to virion release. As to quaternary structure, interacts with serine protease NS3. Homodimer. Interacts with host STAT2; this interaction prevents the establishment of cellular antiviral state. Interacts with serine protease NS3. Interacts with host TRIM23; this interaction leads to NS5 ubiquitination. Post-translationally, specific enzymatic cleavages in vivo yield mature proteins. The nascent capsid protein C contains a C-terminal hydrophobic domain that act as a signal sequence for translocation of prM into the lumen of the ER. Mature capsid protein C is cleaved at a site upstream of this hydrophobic domain by NS3. prM is cleaved in post-Golgi vesicles by a host furin, releasing the mature small envelope protein M, and peptide pr. Non-structural protein 2A-alpha, a C-terminally truncated form of non-structural protein 2A, results from partial cleavage by NS3. Specific enzymatic cleavages in vivo yield mature proteins peptide 2K acts as a signal sequence and is removed from the N-terminus of NS4B by the host signal peptidase in the ER lumen. Signal cleavage at the 2K-4B site requires a prior NS3 protease-mediated cleavage at the 4A-2K site. Cleaved in post-Golgi vesicles by a host furin, releasing the mature small envelope protein M, and peptide pr. This cleavage is incomplete as up to 30% of viral particles still carry uncleaved prM. In terms of processing, N-glycosylated. Post-translationally, N-glycosylated. The excreted form is glycosylated and this is required for efficient secretion of the protein from infected cells. Polyubiquitinated; ubiquitination is probably mediated by host TRIM23 and is prerequisite for NS5-STAT2 interaction. NS5 is not ISGylated or sumoylated. In terms of processing, acetylated by host KAT5. Acetylation modulates NS3 RNA-binding and unwinding activities and plays an important positive role for viral replication. Post-translationally, phosphorylated on serines residues. This phosphorylation may trigger NS5 nuclear localization.

It localises to the virion. Its subcellular location is the host nucleus. The protein localises to the host cytoplasm. The protein resides in the host perinuclear region. It is found in the secreted. It localises to the virion membrane. Its subcellular location is the host endoplasmic reticulum membrane. It catalyses the reaction Selective hydrolysis of -Xaa-Xaa-|-Yaa- bonds in which each of the Xaa can be either Arg or Lys and Yaa can be either Ser or Ala.. It carries out the reaction RNA(n) + a ribonucleoside 5'-triphosphate = RNA(n+1) + diphosphate. The enzyme catalyses a ribonucleoside 5'-triphosphate + H2O = a ribonucleoside 5'-diphosphate + phosphate + H(+). The catalysed reaction is ATP + H2O = ADP + phosphate + H(+). It catalyses the reaction a 5'-end (5'-triphosphoguanosine)-ribonucleoside in mRNA + S-adenosyl-L-methionine = a 5'-end (N(7)-methyl 5'-triphosphoguanosine)-ribonucleoside in mRNA + S-adenosyl-L-homocysteine. It carries out the reaction a 5'-end (N(7)-methyl 5'-triphosphoguanosine)-ribonucleoside in mRNA + S-adenosyl-L-methionine = a 5'-end (N(7)-methyl 5'-triphosphoguanosine)-(2'-O-methyl-ribonucleoside) in mRNA + S-adenosyl-L-homocysteine + H(+). Functionally, plays a role in virus budding by binding to the cell membrane and gathering the viral RNA into a nucleocapsid that forms the core of a mature virus particle. During virus entry, may induce genome penetration into the host cytoplasm after hemifusion induced by the surface proteins. Can migrate to the cell nucleus where it modulates host functions. Its function is as follows. Inhibits RNA silencing by interfering with host Dicer. Prevents premature fusion activity of envelope proteins in trans-Golgi by binding to envelope protein E at pH6.0. After virion release in extracellular space, gets dissociated from E dimers. In terms of biological role, acts as a chaperone for envelope protein E during intracellular virion assembly by masking and inactivating envelope protein E fusion peptide. prM is the only viral peptide matured by host furin in the trans-Golgi network probably to avoid catastrophic activation of the viral fusion activity in acidic Golgi compartment prior to virion release. prM-E cleavage is inefficient, and many virions are only partially matured. These uncleaved prM would play a role in immune evasion. Functionally, may play a role in virus budding. Exerts cytotoxic effects by activating a mitochondrial apoptotic pathway through M ectodomain. May display a viroporin activity. Its function is as follows. Binds to host cell surface receptor and mediates fusion between viral and cellular membranes. Envelope protein is synthesized in the endoplasmic reticulum in the form of heterodimer with protein prM. They play a role in virion budding in the ER, and the newly formed immature particle is covered with 60 spikes composed of heterodimer between precursor prM and envelope protein E. The virion is transported to the Golgi apparatus where the low pH causes dissociation of PrM-E heterodimers and formation of E homodimers. prM-E cleavage is inefficient, and many virions are only partially matured. These uncleaved prM would play a role in immune evasion. Involved in immune evasion, pathogenesis and viral replication. Once cleaved off the polyprotein, is targeted to three destinations: the viral replication cycle, the plasma membrane and the extracellular compartment. Essential for viral replication. Required for formation of the replication complex and recruitment of other non-structural proteins to the ER-derived membrane structures. Excreted as a hexameric lipoparticle that plays a role against host immune response. Antagonizing the complement function. Binds to the host macrophages and dendritic cells. Inhibits signal transduction originating from Toll-like receptor 3 (TLR3). In terms of biological role, component of the viral RNA replication complex that functions in virion assembly and antagonizes the host immune response. Functionally, required cofactor for the serine protease function of NS3. May have membrane-destabilizing activity and form viroporins. Its function is as follows. Displays three enzymatic activities: serine protease, NTPase and RNA helicase. NS3 serine protease, in association with NS2B, performs its autocleavage and cleaves the polyprotein at dibasic sites in the cytoplasm: C-prM, NS2A-NS2B, NS2B-NS3, NS3-NS4A, NS4A-2K and NS4B-NS5. NS3 RNA helicase binds RNA and unwinds dsRNA in the 3' to 5' direction. Also plays a role in virus assembly. Regulates the ATPase activity of the NS3 helicase activity. NS4A allows NS3 helicase to conserve energy during unwinding. In terms of biological role, functions as a signal peptide for NS4B and is required for the interferon antagonism activity of the latter. Functionally, induces the formation of ER-derived membrane vesicles where the viral replication takes place. Inhibits interferon (IFN)-induced host STAT1 phosphorylation and nuclear translocation, thereby preventing the establishment of cellular antiviral state by blocking the IFN-alpha/beta pathway. Its function is as follows. Replicates the viral (+) and (-) RNA genome, and performs the capping of genomes in the cytoplasm. NS5 methylates viral RNA cap at guanine N-7 and ribose 2'-O positions. Besides its role in RNA genome replication, also prevents the establishment of cellular antiviral state by blocking the interferon-alpha/beta (IFN-alpha/beta) signaling pathway. IFN-I induces binding of NS5 to host IFN-activated transcription factor STAT2, preventing its transcriptional activity. Host TRIM23 is the E3 ligase that interacts with and polyubiquitinates NS5 to promote its binding to STAT2 and trigger IFN-I signaling inhibition. This chain is Genome polyprotein, found in Aedes aegypti (Yellowfever mosquito).